A 301-amino-acid chain; its full sequence is Glycine--tRNA ligase alpha subunit (301 aa).

The protein belongs to the class-II aminoacyl-tRNA synthetase family. As to quaternary structure, tetramer of two alpha and two beta subunits.

It localises to the cytoplasm. It carries out the reaction tRNA(Gly) + glycine + ATP = glycyl-tRNA(Gly) + AMP + diphosphate. The sequence is that of Glycine--tRNA ligase alpha subunit from Proteus mirabilis (strain HI4320).